The primary structure comprises 486 residues: Serine/threonine-protein kinase 32C (486 aa).

A disordered region spans residues 1–56 (MRSGAERRGSSAAASPGSPPPGRARPAGSDAPSALPPPAAGQPRARDSGDVRSQPR). 3 positions are modified to phosphoserine: Ser-10, Ser-15, and Ser-18. Residues 24–33 (ARPAGSDAPS) are compositionally biased toward low complexity. The region spanning 93 to 353 (FQILRAIGKG…LQDVQAAPAL (261 aa)) is the Protein kinase domain. ATP is bound by residues 99 to 107 (IGKGSFGKV) and Lys-122. Asp-216 functions as the Proton acceptor in the catalytic mechanism. A compositionally biased stretch (basic residues) spans 396–405 (HKKKKRLAKN). 2 disordered regions span residues 396–419 (HKKK…QSEN) and 444–486 (SQDL…AGSG).

Belongs to the protein kinase superfamily. Ser/Thr protein kinase family. The cofactor is Mg(2+).

It carries out the reaction L-seryl-[protein] + ATP = O-phospho-L-seryl-[protein] + ADP + H(+). The enzyme catalyses L-threonyl-[protein] + ATP = O-phospho-L-threonyl-[protein] + ADP + H(+). This is Serine/threonine-protein kinase 32C from Homo sapiens (Human).